Consider the following 201-residue polypeptide: CASP-like protein 1E1 (201 aa).

Residues methionine 1–glycine 36 are Cytoplasmic-facing. Residues isoleucine 37–alanine 57 form a helical membrane-spanning segment. At arginine 58–alanine 87 the chain is on the extracellular side. A helical membrane pass occupies residues tyrosine 88–leucine 108. Residues serine 109–aspartate 127 lie on the Cytoplasmic side of the membrane. Residues leucine 128–alanine 148 traverse the membrane as a helical segment. The Extracellular segment spans residues glutamate 149–asparagine 173. The helical transmembrane segment at alanine 174–methionine 194 threads the bilayer. Over alanine 195–glutamine 201 the chain is Cytoplasmic.

This sequence belongs to the Casparian strip membrane proteins (CASP) family. In terms of assembly, homodimer and heterodimers.

It is found in the cell membrane. This Musa acuminata (Banana) protein is CASP-like protein 1E1.